We begin with the raw amino-acid sequence, 435 residues long: Enolase (435 aa).

(2R)-2-phosphoglycerate is bound at residue glutamine 163. Glutamate 205 acts as the Proton donor in catalysis. Mg(2+) is bound by residues aspartate 243, glutamate 292, and aspartate 319. Residues lysine 344, arginine 373, serine 374, and lysine 395 each coordinate (2R)-2-phosphoglycerate. Lysine 344 functions as the Proton acceptor in the catalytic mechanism.

The protein belongs to the enolase family. It depends on Mg(2+) as a cofactor.

It localises to the cytoplasm. The protein localises to the secreted. The protein resides in the cell surface. The catalysed reaction is (2R)-2-phosphoglycerate = phosphoenolpyruvate + H2O. It functions in the pathway carbohydrate degradation; glycolysis; pyruvate from D-glyceraldehyde 3-phosphate: step 4/5. In terms of biological role, catalyzes the reversible conversion of 2-phosphoglycerate (2-PG) into phosphoenolpyruvate (PEP). It is essential for the degradation of carbohydrates via glycolysis. This is Enolase from Streptococcus equi subsp. zooepidemicus (strain MGCS10565).